The following is a 168-amino-acid chain: Transcription elongation factor GreB (168 aa).

It belongs to the GreA/GreB family. GreB subfamily.

In terms of biological role, necessary for efficient RNA polymerase transcription elongation past template-encoded arresting sites. The arresting sites in DNA have the property of trapping a certain fraction of elongating RNA polymerases that pass through, resulting in locked ternary complexes. Cleavage of the nascent transcript by cleavage factors such as GreA or GreB allows the resumption of elongation from the new 3'terminus. GreB releases sequences of up to 9 nucleotides in length. The protein is Transcription elongation factor GreB of Xanthomonas axonopodis pv. citri (strain 306).